The sequence spans 236 residues: Increased recombination centers protein 22-2 (236 aa).

Residues 1–19 form the signal peptide; the sequence is MKFSAILTALTATIATVAG. At 20-161 the chain is on the lumenal side; that stretch reads YETSGKPHTV…AAVSFFDPRL (142 aa). Residues 162–182 form a helical membrane-spanning segment; sequence IFLELVLLATFGGIAYFVYEI. Residues 183-236 lie on the Cytoplasmic side of the membrane; sequence WGKQYLRGTAPVKVPVKKSGSPVAVKEASPVGSASGFDESWIPEAHLKKNKKKA.

It belongs to the IRC22 family.

Its subcellular location is the endoplasmic reticulum membrane. Is probably involved in a pathway contributing to genomic integrity. This is Increased recombination centers protein 22-2 (IRC22-2) from Candida tropicalis (strain ATCC MYA-3404 / T1) (Yeast).